Consider the following 114-residue polypeptide: Class I hydrophobin 6 (114 aa).

A signal peptide spans 1-19 (MLFKQLILVATALTTLAVA). 4 disulfides stabilise this stretch: cysteine 33-cysteine 93, cysteine 40-cysteine 87, cysteine 41-cysteine 74, and cysteine 94-cysteine 107. An N-linked (GlcNAc...) asparagine glycan is attached at asparagine 42.

This sequence belongs to the fungal hydrophobin family. Self-assembles to form functional amyloid fibrils called rodlets. Self-assembly into fibrillar rodlets occurs spontaneously at hydrophobic:hydrophilic interfaces and the rodlets further associate laterally to form amphipathic monolayers.

The protein localises to the secreted. It localises to the cell wall. Aerial growth, conidiation, and dispersal of filamentous fungi in the environment rely upon a capability of their secreting small amphipathic proteins called hydrophobins (HPBs) with low sequence identity. Class I can self-assemble into an outermost layer of rodlet bundles on aerial cell surfaces, conferring cellular hydrophobicity that supports fungal growth, development and dispersal; whereas Class II form highly ordered films at water-air interfaces through intermolecular interactions but contribute nothing to the rodlet structure. This is Class I hydrophobin 6 from Pleurotus ostreatus (strain PC15) (Oyster mushroom).